A 174-amino-acid chain; its full sequence is Small ribosomal subunit protein uS5 (174 aa).

The S5 DRBM domain maps to tryptophan 18–isoleucine 81.

Belongs to the universal ribosomal protein uS5 family. As to quaternary structure, part of the 30S ribosomal subunit. Contacts proteins S4 and S8.

In terms of biological role, with S4 and S12 plays an important role in translational accuracy. Located at the back of the 30S subunit body where it stabilizes the conformation of the head with respect to the body. The protein is Small ribosomal subunit protein uS5 of Trichormus variabilis (strain ATCC 29413 / PCC 7937) (Anabaena variabilis).